The sequence spans 387 residues: 4-hydroxy-3-methylbut-2-en-1-yl diphosphate synthase (flavodoxin) (387 aa).

4 residues coordinate [4Fe-4S] cluster: cysteine 293, cysteine 296, cysteine 328, and glutamate 335.

Belongs to the IspG family. [4Fe-4S] cluster serves as cofactor.

The enzyme catalyses (2E)-4-hydroxy-3-methylbut-2-enyl diphosphate + oxidized [flavodoxin] + H2O + 2 H(+) = 2-C-methyl-D-erythritol 2,4-cyclic diphosphate + reduced [flavodoxin]. Its pathway is isoprenoid biosynthesis; isopentenyl diphosphate biosynthesis via DXP pathway; isopentenyl diphosphate from 1-deoxy-D-xylulose 5-phosphate: step 5/6. Converts 2C-methyl-D-erythritol 2,4-cyclodiphosphate (ME-2,4cPP) into 1-hydroxy-2-methyl-2-(E)-butenyl 4-diphosphate. This chain is 4-hydroxy-3-methylbut-2-en-1-yl diphosphate synthase (flavodoxin), found in Treponema denticola (strain ATCC 35405 / DSM 14222 / CIP 103919 / JCM 8153 / KCTC 15104).